The following is a 125-amino-acid chain: Evasin P672 (125 aa).

Residues 1-21 (MAHKIAIGLVCVLYALHIMSA) form the signal peptide. 8 N-linked (GlcNAc...) asparagine glycosylation sites follow: N35, N55, N65, N72, N78, N104, N112, and N118. 3 disulfides stabilise this stretch: C70/C110, C87/C115, and C105/C124.

Its subcellular location is the secreted. Functionally, salivary chemokine-binding protein which has chemokine-neutralizing activity and binds to host chemokines CCL1, CCL2, CCL3, CCL3L1, CCL7, CCL8, CCL11, CCL12, CCL13, CCL14, CCL15, CCL16, CCL18 and CCL23. Binds to CCL8 with 1:1 stoichiometry and disrupts CCL8 homodimer formation. This chain is Evasin P672, found in Rhipicephalus pulchellus (Yellow backed tick).